Consider the following 124-residue polypeptide: MSKTIGITGFFLSIVVQSFSANDSLSHKIATGLLFVSIAIYNFDHAKDYSKASLVVICLTFFVLALGIHKLLSFSSDLFDNVNINFGVIFILQITLIIGSVAIAISIMKFICDRLKKKPNGKEC.

The next 2 membrane-spanning stretches (helical) occupy residues 54–74 and 88–108; these read LVVI…LLSF and VIFI…ISIM.

The protein resides in the cell membrane. This is SPbeta prophage-derived uncharacterized protein YoqO (yoqO) from Bacillus subtilis (strain 168).